Here is a 283-residue protein sequence, read N- to C-terminus: Cuticle collagen 49 (283 aa).

The N-terminal stretch at 1–19 (MWKFVIGSVSTAAFFVSVC) is a signal peptide. The segment at 90–283 (EPTKNCPAGP…GYCTCPPRTA (194 aa)) is disordered. Basic and acidic residues predominate over residues 127-139 (VVIHDMPNPKECI). Over residues 143–155 (AGPPGPPGPPGPL) the composition is skewed to pro residues. Over residues 185–204 (QGPPGSAGRAGPRGQAGQPG) the composition is skewed to low complexity. The region spanning 213-271 (GRPGPQGPLGEPGAQGEPGVDGKDGALGAPGRKAENGRPGKRGKDGVAGVPGTRGKEGE) is the Collagen-like domain. A compositionally biased stretch (basic and acidic residues) spans 244-257 (RKAENGRPGKRGKD).

It belongs to the cuticular collagen family. In terms of assembly, collagen polypeptide chains are complexed within the cuticle by disulfide bonds and other types of covalent cross-links.

Functionally, probable cuticular collagen-like protein. Nematode cuticles are composed largely of collagen-like proteins. The cuticle functions both as an exoskeleton and as a barrier to protect the worm from its environment. Acts downstream of the Wnt signaling pathway, perhaps in the formation of the adult cuticle. The polypeptide is Cuticle collagen 49 (Caenorhabditis elegans).